Here is a 306-residue protein sequence, read N- to C-terminus: MQQQLEQFLAYLTVERGLTGNTIAAYRTDLDQFVNFIVERNTGSWSNVSRDDLLAFLLFLKEKRYATSTIARRTAAIKSFFEYLQGQHSITTNPTENLDSPKVDRFLPKAITVAQVDELLELPLTTSGPEGLRDKAMLEVLYATGMRVSELVALDVGDVDLAIHQIRCLGKANKERNLPIVGSASTALEEYLDIARGQISRNGGDPALFLNHRGKRLTRQGFWLILKGYAERLGLSDLTPHTLRHSFATHMLNRGKDLREVQELLGHASISTTQIYTHVSNDRAVKYDQAAQRPTVANAAEVEFSA.

The Core-binding (CB) domain maps to Met-1–Gln-85. Residues Phe-106–Gln-289 enclose the Tyr recombinase domain. Active-site residues include Arg-147, Lys-171, His-241, Arg-244, and His-267. The O-(3'-phospho-DNA)-tyrosine intermediate role is filled by Tyr-276.

The protein belongs to the 'phage' integrase family. XerC subfamily. As to quaternary structure, forms a cyclic heterotetrameric complex composed of two molecules of XerC and two molecules of XerD.

It localises to the cytoplasm. Site-specific tyrosine recombinase, which acts by catalyzing the cutting and rejoining of the recombining DNA molecules. The XerC-XerD complex is essential to convert dimers of the bacterial chromosome into monomers to permit their segregation at cell division. It also contributes to the segregational stability of plasmids. In Herpetosiphon aurantiacus (strain ATCC 23779 / DSM 785 / 114-95), this protein is Tyrosine recombinase XerC.